A 390-amino-acid chain; its full sequence is Pepsin B (390 aa).

A signal peptide spans 1-16 (MKIQVLVLVCLHLSEG). A propeptide spans 17-59 (VERIILKKGKSIRQVMEERGVLETFLRNHPKVDPAAKYLFNND) (activation peptide). Residues 74–387 (YFGEISIGTP…DMAANRVGFA (314 aa)) enclose the Peptidase A1 domain. Aspartate 92 is a catalytic residue. Cystine bridges form between cysteine 105–cysteine 110 and cysteine 269–cysteine 273. Residue aspartate 278 is part of the active site. Residues cysteine 312 and cysteine 345 are joined by a disulfide bond.

The protein belongs to the peptidase A1 family.

Its subcellular location is the secreted. It carries out the reaction Degradation of gelatin, little activity on hemoglobin. Specificity on B chain of insulin more restricted than that of pepsin A. Does not cleave 1-Phe-|-Val-2, 4-Gln-|-His-5 or 23-Gly-|-Phe-24.. In terms of biological role, hydrolyzes various peptides including beta-endorphin, insulin B chain, dynorphin A, and neurokinin A, with high specificity for the cleavage of the Phe-Xaa bonds. This chain is Pepsin B (PGB), found in Canis lupus familiaris (Dog).